The chain runs to 784 residues: Toll-like receptor 2 (784 aa).

Residues 1–24 (MLHVLWTFWILVAMTDLSRKGCSA) form the signal peptide. The Extracellular segment spans residues 25–588 (QASLSCDAAG…RPSVLECHQT (564 aa)). A disulfide bridge connects residues Cys30 and Cys36. 19 LRR repeats span residues 54-77 (MKSL…GCVN), 78-101 (LRAL…SLSK), 102-125 (LEYL…PLSS), 126-150 (LKYL…NLTH), 151-175 (LQTL…GLTS), 176-199 (LDEL…SIQS), 200-223 (IHHL…TLSS), 224-250 (VGYL…MNSP), 251-278 (MKKL…YTPE), 279-308 (LLEV…ELGK), 309-337 (VETL…LLEK), 338-361 (VKRI…HLKS), 362-388 (LEFL…SWPS), 389-414 (LQTL…TLKN), 415-437 (LTAL…WPGK), 438-457 (MRFL…CIPQ), 458-478 (TLEV…FLPL), 479-500 (LREL…LFPV), and 501-524 (LLVM…SFPK). Asn114 and Asn147 each carry an N-linked (GlcNAc...) asparagine glycan. Cys353 and Cys382 are joined by a disulfide. Asn414 carries N-linked (GlcNAc...) asparagine glycosylation. Cysteines 432 and 454 form a disulfide. N-linked (GlcNAc...) asparagine glycosylation occurs at Asn442. One can recognise an LRRCT domain in the interval 525 to 579 (LVSLEAGGNHFICSCELLSFTLEHPALVQVLAGWPDSYLCDSPSRLRGQRVQDAR). The chain crosses the membrane as a helical span at residues 589 to 609 (LLVSGVCCALVLLILLIGGLC). Residues 610 to 784 (HHFHGLWYLR…WVNLRTAIKS (175 aa)) lie on the Cytoplasmic side of the membrane. Residues 639–782 (ICYDAFVSYS…VFWVNLRTAI (144 aa)) form the TIR domain. Residue Lys754 forms a Glycyl lysine isopeptide (Lys-Gly) (interchain with G-Cter in ubiquitin) linkage. The short motif at 761–778 (YLEWPLDEGQQEVFWVNL) is the ATG16L1-binding motif element.

It belongs to the Toll-like receptor family. As to quaternary structure, interacts with LY96, TLR1 and TLR6 (via extracellular domain). TLR2 seems to exist in heterodimers with either TLR1 or TLR6 before stimulation by the ligand. The heterodimers form bigger oligomers in response to their corresponding ligands as well as further heterotypic associations with other receptors such as CD14 and/or CD36. Binds MYD88 (via TIR domain). Interacts with TICAM1. Interacts with CNPY3. Interacts with ATG16L1. Interacts with PPP1R11. Interacts with TICAM2. Interacts with TIRAP. Post-translationally, ubiquitinated at Lys-754 by PPP1R11, leading to its degradation. Deubiquitinated by USP2. Glycosylation of Asn-442 is critical for secretion of the N-terminal ectodomain of TLR2.

It localises to the membrane. It is found in the cytoplasmic vesicle. The protein localises to the phagosome membrane. The protein resides in the membrane raft. Its function is as follows. Cooperates with LY96 to mediate the innate immune response to bacterial lipoproteins and other microbial cell wall components. Cooperates with TLR1 or TLR6 to mediate the innate immune response to bacterial lipoproteins or lipopeptides. Acts via MYD88 and TRAF6, leading to NF-kappa-B activation, cytokine secretion and the inflammatory response. May also promote apoptosis in response to lipoproteins. Forms activation clusters composed of several receptors depending on the ligand, these clusters trigger signaling from the cell surface and subsequently are targeted to the Golgi in a lipid-raft dependent pathway. Forms the cluster TLR2:TLR6:CD14:CD36 in response to diacylated lipopeptides and TLR2:TLR1:CD14 in response to triacylated lipopeptides. In Cricetulus griseus (Chinese hamster), this protein is Toll-like receptor 2 (TLR2).